The following is a 725-amino-acid chain: A-agglutinin anchorage subunit (725 aa).

A signal peptide spans 1-24 (MTLSFAHFTYLFTILLGLTNIALA). Tandem repeats lie at residues 53 to 149 (VSTS…EVGT), 182 to 188 (TTTSLSS), 189 to 195 (TSTSPSS), 196 to 202 (TSTSPSS), 203 to 209 (TSTSSSS), 210 to 216 (TSTSSSS), 217 to 223 (TSTSSSS), 224 to 230 (TSTSPSS), 231 to 237 (TSTSSSL), 238 to 244 (TSTSSSS), 245 to 251 (TSTSQSS), 252 to 258 (TSTSSSS), 259 to 265 (TSTSPSS), 266 to 272 (TSTSSSS), 273 to 279 (TSTSPSS), 280 to 286 (KSTSASS), 287 to 293 (TSTSSYS), 294 to 300 (TSTSPSL), and 301 to 307 (TSSSPTL). The interval 53–493 (VSTSTIVQAG…TSHSYSSVQT (441 aa)) is 2 X approximate repeats. Disordered stretches follow at residues 168–318 (PVTS…TSIS) and 335–363 (SSTS…TPSM). The 18 X approximate tandem repeats, Ser/Thr-rich stretch occupies residues 182–307 (TTTSLSSTST…PSLTSSSPTL (126 aa)). A 1-2 repeat occupies 395-493 (MSTYFTTVSG…TSHSYSSVQT (99 aa)). Glycine 699 carries GPI-anchor amidated glycine lipidation. Residues 700–725 (SGSQTRLPLGKLVFAIMAVACNVIFS) constitute a propeptide, removed in mature form.

In terms of assembly, heterodimer; disulfide-linked. Post-translationally, extensively O-glycosylated by PMT1 and PMT2. In terms of processing, the GPI-anchor is attached to the protein in the endoplasmic reticulum and serves to target the protein to the cell surface. There, the glucosamine-inositol phospholipid moiety is cleaved off and the GPI-modified mannoprotein is covalently attached via its lipidless GPI glycan remnant to the 1,6-beta-glucan of the outer cell wall layer.

It is found in the secreted. The protein resides in the cell wall. It localises to the membrane. Functionally, cell wall anchoring subunit of the a-agglutinin heterodimer. S.cerevisiae a and alpha cells express the complementary cell surface glycoproteins a-agglutinin and alpha-agglutinin, respectively, which interact with one another to promote cellular aggregation during mating. The chain is A-agglutinin anchorage subunit (AGA1) from Saccharomyces cerevisiae (strain ATCC 204508 / S288c) (Baker's yeast).